Here is a 115-residue protein sequence, read N- to C-terminus: Gonadotropin subunit beta-2 (115 aa).

6 cysteine pairs are disulfide-bonded: C6-C54, C20-C69, C23-C107, C31-C85, C35-C87, and C90-C97. The N-linked (GlcNAc...) asparagine glycan is linked to N10.

This sequence belongs to the glycoprotein hormones subunit beta family. As to quaternary structure, heterodimer of an alpha and a beta chain.

The protein localises to the secreted. Involved in gametogenesis and steroidogenesis. This Thunnus obesus (Bigeye tuna) protein is Gonadotropin subunit beta-2 (cgbb).